The following is a 544-amino-acid chain: Ribosomal oxygenase 1 (544 aa).

Residues 1–78 (MERKHMSALS…HEGERDCREM (78 aa)) are disordered. Residues 10–19 (SIYQSLSGGK) show a composition bias toward polar residues. Residues 42-53 (PSKKATKKKGTK) are compositionally biased toward basic residues. The segment covering 63 to 78 (SSEKEKHEGERDCREM) has biased composition (basic and acidic residues). Residues 197–342 (CSIRMLNPQA…DLMLKLMPAA (146 aa)) enclose the JmjC domain. His-243, Asp-245, and His-308 together coordinate Fe cation.

Belongs to the ROX family. NO66 subfamily. Requires Fe(2+) as cofactor.

The protein localises to the nucleus. It localises to the nucleolus. It is found in the nucleoplasm. The enzyme catalyses N(6),N(6)-dimethyl-L-lysyl(36)-[histone H3] + 2 2-oxoglutarate + 2 O2 = L-lysyl(36)-[histone H3] + 2 formaldehyde + 2 succinate + 2 CO2. It carries out the reaction N(6)-methyl-L-lysyl-[protein] + 2-oxoglutarate + O2 = L-lysyl-[protein] + formaldehyde + succinate + CO2. It catalyses the reaction L-histidyl-[protein] + 2-oxoglutarate + O2 = (3S)-3-hydroxy-L-histidyl-[protein] + succinate + CO2. Oxygenase that can act as both a histone lysine demethylase and a ribosomal histidine hydroxylase. Specifically demethylates 'Lys-4' (H3K4me) and 'Lys-36' (H3K36me) of histone H3, thereby playing a central role in histone code. Preferentially demethylates trimethylated H3 'Lys-4' (H3K4me3) and monomethylated H3 'Lys-4' (H3K4me1) residues, while it has weaker activity for dimethylated H3 'Lys-36' (H3K36me2). Also catalyzes demethylation of non-histone proteins. Also catalyzes the hydroxylation of 60S ribosomal protein L8 on 'His-216', thereby playing a role in ribosome biogenesis. The sequence is that of Ribosomal oxygenase 1 (riox1) from Danio rerio (Zebrafish).